The sequence spans 83 residues: Mu-theraphotoxin-Hhn2g (83 aa).

The first 21 residues, 1–21 (MKASMYLALAGLVLLFVVGYA), serve as a signal peptide directing secretion. The propeptide occupies 22–48 (SESEEKEFPRELLSKIFAVDDFKGEER). 2 disulfides stabilise this stretch: Cys50–Cys65 and Cys57–Cys70. Residue Leu81 is modified to Leucine amide.

This sequence belongs to the neurotoxin 10 (Hwtx-1) family. 15 (Hntx-3) subfamily. Monomer. As to expression, expressed by the venom gland.

The protein resides in the secreted. Its function is as follows. Lethal neurotoxin. Selectively blocks tetrodotoxin-sensitive voltage-gated sodium channels (Nav). Does not affect tetrodotoxin-resistant voltage-gated sodium channels or calcium channels. The protein is Mu-theraphotoxin-Hhn2g of Cyriopagopus hainanus (Chinese bird spider).